Here is a 238-residue protein sequence, read N- to C-terminus: 1-(5-phosphoribosyl)-5-[(5-phosphoribosylamino)methylideneamino] imidazole-4-carboxamide isomerase (238 aa).

The Proton acceptor role is filled by Asp8. Asp129 serves as the catalytic Proton donor.

Belongs to the HisA/HisF family.

The protein resides in the cytoplasm. The catalysed reaction is 1-(5-phospho-beta-D-ribosyl)-5-[(5-phospho-beta-D-ribosylamino)methylideneamino]imidazole-4-carboxamide = 5-[(5-phospho-1-deoxy-D-ribulos-1-ylimino)methylamino]-1-(5-phospho-beta-D-ribosyl)imidazole-4-carboxamide. It functions in the pathway amino-acid biosynthesis; L-histidine biosynthesis; L-histidine from 5-phospho-alpha-D-ribose 1-diphosphate: step 4/9. This Brachyspira hyodysenteriae (strain ATCC 49526 / WA1) protein is 1-(5-phosphoribosyl)-5-[(5-phosphoribosylamino)methylideneamino] imidazole-4-carboxamide isomerase.